A 60-amino-acid chain; its full sequence is UPF0391 membrane protein CCNA_00709 (60 aa).

2 consecutive transmembrane segments (helical) span residues 4 to 24 and 33 to 53; these read WAII…SGLA and ILFF…GTVF.

It belongs to the UPF0391 family.

It is found in the cell membrane. This is UPF0391 membrane protein CCNA_00709 from Caulobacter vibrioides (strain NA1000 / CB15N) (Caulobacter crescentus).